Here is a 401-residue protein sequence, read N- to C-terminus: Nodal homolog 3-B (401 aa).

Residues 1–18 (MALLNLFFCLVFSSPLMA) form the signal peptide. Positions 19–274 (MPPVLQGRKS…KVNGFRRLRR (256 aa)) are excised as a propeptide. 4 N-linked (GlcNAc...) asparagine glycosylation sites follow: asparagine 168, asparagine 337, asparagine 341, and asparagine 344. Intrachain disulfides connect cysteine 299–cysteine 365 and cysteine 328–cysteine 396.

It belongs to the TGF-beta family. As to quaternary structure, monomer. The propeptide region interacts with bmp4 in a non-covalent manner. In terms of tissue distribution, expressed in the dorsal marginal region of late blastula, becoming restricted to the dorsal blastopore lip (Spemann organizer) at the early gastrula stage.

The protein localises to the secreted. Its function is as follows. Exhibits mesoderm-dorsalizing activity and neural-inducing activity, but lacks mesoderm-inducing activity. Regulates the expression of specific mesodermal and neural genes. Induces convergent extension movements at the embryonic midline by activating the fgf signaling pathway to induce t/bra expression in the organizer region. Acts with wnt11 to induce Spemann organizer cells and induce axis formation. The unprocessed protein antagonizes bmp-signaling. The sequence is that of Nodal homolog 3-B (nodal3-b) from Xenopus laevis (African clawed frog).